The following is an 820-amino-acid chain: MRSFIKTHKRASSLDNSPRKSSNESPENRRNSQGSFGTELSYPSGYPPNNVLKQSSSFEPLHKLTSNKIFSSKLFKKSSNGKTSSSNTSPLLSRSDAETFAPLLSNTNNIPAIKGTRKHEWGDNDDTSESVILLNRTSMSSMSDTNQDTPDTEIVRIHPNSQQGSILSSQTSADRTPRLSLEEAEDVEDYDITKHSSLSRSQSLKKKRNRLARIHSHDDIMHLRSQSSFSSDLLGSGFSPIPEKSPNPSPLPKYERSPRKENNILDRTNLFDLRKISEASYTAEDESNFNRPFTGVAGGETIQITTSIKDSFVPSPETSHKIRFAADNVIPLSKAQIIENSASEADEDDSNEEDGEEESDSSSRFSFENGNDLCGRTASLKYYSTETNTPPLYVNDIYENDNFDDEMNYFDSNEEEDENMDHLYGGDNTALSGFAGMCTLSDDEFDRTNAAISQELSSHSSQSSKGYTERQRGFSKRDSNKSFEDGNDDYDPSNHCRSYHDIYNLSDEEEAQTINKKVTEPRKRKISDGTNKVTKYADMFLLSDDDAESGSQDEDFGDESRENDVKFNVNSERYGVEHTNLVTTQNHNLNPISFKSPSRFLDVSNVNHSPLAYKTPERNILKSPLQQPIKYHGVSSLLDNDIQGTMKNLYYIDETDEDRFLENSAESEEYYLDEINGIPEDFEFSDDENIMRNLSPLSRLNRTKLLAFRRTHSYSDRPLGVLKDNTPLNYKLEIKNKTVTFFDHNSIHRSYSEPFSSSLLHDSRKSEDNCEDRILDNKTLASPVTPNSSFTKPSPSFTQNSSLSPIQESTTSSDASPKIL.

Residues 1 to 11 (MRSFIKTHKRA) are compositionally biased toward basic residues. 6 disordered regions span residues 1-54 (MRSF…VLKQ), 158-182 (HPNS…LSLE), 231-266 (SDLL…NILD), 341-370 (SASE…FENG), 454-498 (QELS…HCRS), and 777-820 (NKTL…PKIL). A compositionally biased stretch (basic and acidic residues) spans 17-30 (SPRKSSNESPENRR). Over residues 159-174 (PNSQQGSILSSQTSAD) the composition is skewed to polar residues. The span at 253–264 (KYERSPRKENNI) shows a compositional bias: basic and acidic residues. Over residues 344–360 (EADEDDSNEEDGEEESD) the composition is skewed to acidic residues. The segment covering 454–464 (QELSSHSSQSS) has biased composition (low complexity). The span at 467-484 (YTERQRGFSKRDSNKSFE) shows a compositional bias: basic and acidic residues. Residues 779 to 820 (TLASPVTPNSSFTKPSPSFTQNSSLSPIQESTTSSDASPKIL) show a composition bias toward polar residues.

It belongs to the ZRG8 family.

It localises to the cytoplasm. It is found in the bud. The protein resides in the bud neck. The protein localises to the bud tip. In terms of biological role, involved in maintenance of polarized growth and daughter-cell-specific transcription. The sequence is that of Zinc-regulated protein 8 (ZRG8) from Kluyveromyces lactis (strain ATCC 8585 / CBS 2359 / DSM 70799 / NBRC 1267 / NRRL Y-1140 / WM37) (Yeast).